The sequence spans 328 residues: UPF0421 protein SAV1889 (328 aa).

The next 4 membrane-spanning stretches (helical) occupy residues 19 to 39, 61 to 81, 108 to 128, and 132 to 152; these read IAIF…IYAI, LPAT…FGDQ, VAVL…IFNF, and TLTA…VFPP.

It belongs to the UPF0421 family.

Its subcellular location is the cell membrane. The sequence is that of UPF0421 protein SAV1889 from Staphylococcus aureus (strain Mu50 / ATCC 700699).